A 644-amino-acid chain; its full sequence is Core protein VP4 (644 aa).

This sequence belongs to the orbivirus VP4 family.

The protein resides in the virion. Functionally, the VP4 protein is one of the five proteins (with VP1, VP3, VP6 and VP7) which form the inner capsid of the virus. This Antilocapra americana (Pronghorn) protein is Core protein VP4 (Segment-4).